Here is a 728-residue protein sequence, read N- to C-terminus: 1,4-alpha-glucan branching enzyme GlgB (728 aa).

Residue aspartate 405 is the Nucleophile of the active site. Glutamate 458 functions as the Proton donor in the catalytic mechanism.

The protein belongs to the glycosyl hydrolase 13 family. GlgB subfamily. In terms of assembly, monomer.

It catalyses the reaction Transfers a segment of a (1-&gt;4)-alpha-D-glucan chain to a primary hydroxy group in a similar glucan chain.. The protein operates within glycan biosynthesis; glycogen biosynthesis. Catalyzes the formation of the alpha-1,6-glucosidic linkages in glycogen by scission of a 1,4-alpha-linked oligosaccharide from growing alpha-1,4-glucan chains and the subsequent attachment of the oligosaccharide to the alpha-1,6 position. The chain is 1,4-alpha-glucan branching enzyme GlgB from Serratia proteamaculans (strain 568).